The following is a 328-amino-acid chain: E3 ubiquitin-protein ligase SINA-like 5 (328 aa).

A disordered region spans residues 1-77 (MARSGGNDGH…GSPKSSQPVK (77 aa)). Acidic residues-rich tracts occupy residues 10–20 (HEEELDPELFE) and 27–62 (GYEDGEFEEDEEEFEEEEEELEEEEDEEEEEEENVT). Residues 63 to 77 (TDEQSGSPKSSQPVK) are compositionally biased toward polar residues. Residues 86-122 (CPTCCEPLKRPIYQCSNGHLACSSCCQKLNKKCSFCR) form an RING-type; degenerate zinc finger. The segment at 136–324 (VIEASIVPCP…MQICIAYGYK (189 aa)) is SBD. The SIAH-type; degenerate zinc-finger motif lies at 139–197 (ASIVPCPNAKHGCKETTTYCNQSSHEKVCKFVRCSCPVSNCNYVSSYSNLKSHACSTAH). The Zn(2+) site is built by Cys144, Cys151, His163, Cys167, Cys174, Cys179, His191, and His197.

Belongs to the SINA (Seven in absentia) family.

It catalyses the reaction S-ubiquitinyl-[E2 ubiquitin-conjugating enzyme]-L-cysteine + [acceptor protein]-L-lysine = [E2 ubiquitin-conjugating enzyme]-L-cysteine + N(6)-ubiquitinyl-[acceptor protein]-L-lysine.. It participates in protein modification; protein ubiquitination. Its function is as follows. E3 ubiquitin-protein ligase that mediates ubiquitination and subsequent proteasomal degradation of target proteins. E3 ubiquitin ligases accept ubiquitin from an E2 ubiquitin-conjugating enzyme in the form of a thioester and then directly transfers the ubiquitin to targeted substrates. It probably triggers the ubiquitin-mediated degradation of different substrates. In Arabidopsis thaliana (Mouse-ear cress), this protein is E3 ubiquitin-protein ligase SINA-like 5.